We begin with the raw amino-acid sequence, 1002 residues long: SIT4-associating protein SAP155 (1002 aa).

Disordered stretches follow at residues Gly51–Met131, Gln214–Asp273, Glu609–Tyr645, Asp868–Gln901, and Asn940–Glu1002. A Phosphoserine modification is found at Ser58. A compositionally biased stretch (basic and acidic residues) spans Glu62 to Ser97. A compositionally biased stretch (low complexity) spans Met98–Ser114. A compositionally biased stretch (acidic residues) spans Ser220–Asn241. Ser255 is subject to Phosphoserine. Acidic residues predominate over residues Asn262 to Asp273. The segment covering Glu609–Lys626 has biased composition (basic and acidic residues). Phosphothreonine is present on residues Thr613 and Thr618. Positions Asp635–Tyr645 are enriched in acidic residues. Polar residues predominate over residues Asp868–Ile885. Residues Ser956–Asn976 are compositionally biased toward low complexity. Acidic residues predominate over residues Glu991–Glu1002.

It belongs to the SAPS family. Associates with the SIT4 protein phosphatase catalytic subunit in a cell-cycle-dependent manner. Hyperphosphorylated in the absence of SIT4.

Its subcellular location is the cytoplasm. Its function is as follows. Positive regulator of protein phosphatase SIT4. Involved in directing expression of TOR-repressed genes and in dephosphorylation of NPR1 in response to nutrient starvation. Negatively modulates K(+) efflux of the cell by the Na(+)-K(+)/H(+) antiporter NHA1. The chain is SIT4-associating protein SAP155 (SAP155) from Saccharomyces cerevisiae (strain ATCC 204508 / S288c) (Baker's yeast).